Reading from the N-terminus, the 262-residue chain is Phycoerythrobilin:ferredoxin oxidoreductase (262 aa).

Belongs to the HY2 family.

It carries out the reaction (3Z)-phycoerythrobilin + oxidized 2[4Fe-4S]-[ferredoxin] = 15,16-dihydrobiliverdin + reduced 2[4Fe-4S]-[ferredoxin] + 2 H(+). In terms of biological role, catalyzes the two-electron reduction of the C2 and C3(1) diene system of 15,16-dihydrobiliverdin. This is Phycoerythrobilin:ferredoxin oxidoreductase from Synechococcus sp. (strain RCC307).